Here is a 353-residue protein sequence, read N- to C-terminus: Photosystem II D2 protein (353 aa).

Thr2 bears the N-acetylthreonine mark. Thr2 carries the post-translational modification Phosphothreonine. The chain crosses the membrane as a helical span at residues 41-61; sequence CAYFALGGWFTGTTFVTSWYT. His118 contributes to the chlorophyll a binding site. A helical transmembrane segment spans residues 125 to 141; sequence GFMLRQFELARPVQLRP. Pheophytin a contacts are provided by Gln130 and Asn143. The helical transmembrane segment at 153–166 threads the bilayer; the sequence is VFLSVFLIYPLGQS. A chlorophyll a-binding site is contributed by His198. The helical transmembrane segment at 208–228 threads the bilayer; the sequence is AVLLCAIHGATVENTLFEDGD. His215 and Phe262 together coordinate a plastoquinone. Position 215 (His215) interacts with Fe cation. His269 contributes to the Fe cation binding site. The helical transmembrane segment at 279 to 295 threads the bilayer; it reads GLWMSAIGVVGLALNLR.

This sequence belongs to the reaction center PufL/M/PsbA/D family. PSII is composed of 1 copy each of membrane proteins PsbA, PsbB, PsbC, PsbD, PsbE, PsbF, PsbH, PsbI, PsbJ, PsbK, PsbL, PsbM, PsbT, PsbX, PsbY, PsbZ, Psb30/Ycf12, at least 3 peripheral proteins of the oxygen-evolving complex and a large number of cofactors. It forms dimeric complexes. The D1/D2 heterodimer binds P680, chlorophylls that are the primary electron donor of PSII, and subsequent electron acceptors. It shares a non-heme iron and each subunit binds pheophytin, quinone, additional chlorophylls, carotenoids and lipids. There is also a Cl(-1) ion associated with D1 and D2, which is required for oxygen evolution. The PSII complex binds additional chlorophylls, carotenoids and specific lipids. serves as cofactor. In terms of processing, only phosphorylated in mesophyll cells, phosphorylation increases when cells are grown under high rather than low light regimes (70 vs 900 umol photons/m-2/s).

The protein resides in the plastid. The protein localises to the chloroplast thylakoid membrane. The catalysed reaction is 2 a plastoquinone + 4 hnu + 2 H2O = 2 a plastoquinol + O2. Functionally, photosystem II (PSII) is a light-driven water:plastoquinone oxidoreductase that uses light energy to abstract electrons from H(2)O, generating O(2) and a proton gradient subsequently used for ATP formation. It consists of a core antenna complex that captures photons, and an electron transfer chain that converts photonic excitation into a charge separation. The D1/D2 (PsbA/PsbD) reaction center heterodimer binds P680, the primary electron donor of PSII as well as several subsequent electron acceptors. D2 is needed for assembly of a stable PSII complex. This is Photosystem II D2 protein from Zea mays (Maize).